A 725-amino-acid chain; its full sequence is Methionine--tRNA ligase (725 aa).

The 'HIGH' region motif lies at 27 to 37; it reads PYANGQIHIGH. Residues Cys-158, Cys-161, Cys-171, and Cys-174 each coordinate Zn(2+). A 'KMSKS' region motif is present at residues 348-352; the sequence is KMSKS. An ATP-binding site is contributed by Lys-351. Residues 619–725 enclose the tRNA-binding domain; sequence DFAKIDLRIA…SGAKPGMRVK (107 aa).

The protein belongs to the class-I aminoacyl-tRNA synthetase family. MetG type 1 subfamily. Homodimer. The cofactor is Zn(2+).

The protein localises to the cytoplasm. It carries out the reaction tRNA(Met) + L-methionine + ATP = L-methionyl-tRNA(Met) + AMP + diphosphate. Its function is as follows. Is required not only for elongation of protein synthesis but also for the initiation of all mRNA translation through initiator tRNA(fMet) aminoacylation. The polypeptide is Methionine--tRNA ligase (Burkholderia mallei (strain NCTC 10247)).